The chain runs to 386 residues: Orphan methyltransferase M.SssI (386 aa).

The region spanning 11–386 (LRVFEAFAGI…LEAIIDKIGG (376 aa)) is the SAM-dependent MTase C5-type domain. The active site involves C141.

This sequence belongs to the class I-like SAM-binding methyltransferase superfamily. C5-methyltransferase family.

It carries out the reaction a 2'-deoxycytidine in DNA + S-adenosyl-L-methionine = a 5-methyl-2'-deoxycytidine in DNA + S-adenosyl-L-homocysteine + H(+). This de novo methylase acts completely and exclusively on CG residues in DNA; methylates unmethylated and hemi-methylated DNA. The chain is Orphan methyltransferase M.SssI (sssIM) from Spiroplasma monobiae (strain ATCC 33825 / MQ-1).